The primary structure comprises 426 residues: Serine--tRNA ligase (426 aa).

Residue 232 to 234 (TAE) coordinates L-serine. Position 263 to 265 (263 to 265 (RSE)) interacts with ATP. Glutamate 286 serves as a coordination point for L-serine. 350 to 353 (EISS) contacts ATP. Serine 385 serves as a coordination point for L-serine.

Belongs to the class-II aminoacyl-tRNA synthetase family. Type-1 seryl-tRNA synthetase subfamily. Homodimer. The tRNA molecule binds across the dimer.

It localises to the cytoplasm. The enzyme catalyses tRNA(Ser) + L-serine + ATP = L-seryl-tRNA(Ser) + AMP + diphosphate + H(+). The catalysed reaction is tRNA(Sec) + L-serine + ATP = L-seryl-tRNA(Sec) + AMP + diphosphate + H(+). The protein operates within aminoacyl-tRNA biosynthesis; selenocysteinyl-tRNA(Sec) biosynthesis; L-seryl-tRNA(Sec) from L-serine and tRNA(Sec): step 1/1. Catalyzes the attachment of serine to tRNA(Ser). Is also able to aminoacylate tRNA(Sec) with serine, to form the misacylated tRNA L-seryl-tRNA(Sec), which will be further converted into selenocysteinyl-tRNA(Sec). The protein is Serine--tRNA ligase of Pediococcus pentosaceus (strain ATCC 25745 / CCUG 21536 / LMG 10740 / 183-1w).